The following is a 390-amino-acid chain: MATGDLKRSLRNLEQVLRLLNYPEEVDCVGLIKGDPAASLPIISYSFTSYSPYVTELIMESNVELIAKNDLRFIDAVYKLLRDQFNYKPILTKKQFIQCGFAEWKIQIVCDILNCVMKKHKELSSLQKIPSQQRKKISSGKSEPPLGNEKISAEAVGVDISGRFMTSGKKKAVVIRHLYNEDNVDISEDTLSPITDVNEAVDVSDLNATEIKMPEVKVPEIKAEQQDVNVNPEITALQTMLAECQENLKKLTSIEKRLDCLEQKMKGKVMVDENTWTNLLSRVTLLETEMLLSKKNDEFIEFNEVSEDYASCSDMDLLNPHRKSEVERPASIPLSSGYSTASSDSTPRASTVNYCGLNEISEETTIQKMERMKKMFEETAELLKCPNHYL.

The segment at 11–195 (RNLEQVLRLL…ISEDTLSPIT (185 aa)) is binds with microtubules and centrioles. A coiled-coil region spans residues 233–269 (EITALQTMLAECQENLKKLTSIEKRLDCLEQKMKGKV). The interval 322–348 (RKSEVERPASIPLSSGYSTASSDSTPR) is disordered. Phosphoserine is present on residues serine 331 and serine 345. Over residues 335-345 (SSGYSTASSDS) the composition is skewed to low complexity. Threonine 346 bears the Phosphothreonine mark. The stretch at 361–385 (SEETTIQKMERMKKMFEETAELLKC) forms a coiled coil.

As to quaternary structure, interacts with CROCC. Interacts with POC1B; the interaction is direct and recruits POC1B to centriolar microtubules. Binds to centriolar microtubules.

It localises to the cytoplasm. It is found in the cytoskeleton. The protein resides in the microtubule organizing center. Its subcellular location is the centrosome. The protein localises to the centriole. It localises to the spindle pole. It is found in the midbody. Functionally, centriole-enriched microtubule-binding protein involved in centriole biogenesis. In collaboration with CEP295 and POC1B, is required for the centriole-to-centrosome conversion by ensuring the formation of bona fide centriole wall. Functions as a linker component that maintains centrosome cohesion. Associates with CROCC and regulates its stability and localization to the centrosome. This Homo sapiens (Human) protein is Centrosomal protein of 44 kDa (CEP44).